Here is a 240-residue protein sequence, read N- to C-terminus: Uridylate kinase (240 aa).

12–15 contacts ATP; the sequence is KLSG. Glycine 54 contributes to the UMP binding site. The ATP site is built by glycine 55 and arginine 59. UMP-binding positions include aspartate 74 and 135–142; that span reads TGNPFFTT. ATP contacts are provided by threonine 162, tyrosine 168, and aspartate 171.

It belongs to the UMP kinase family. Homohexamer.

The protein resides in the cytoplasm. It catalyses the reaction UMP + ATP = UDP + ADP. Its pathway is pyrimidine metabolism; CTP biosynthesis via de novo pathway; UDP from UMP (UMPK route): step 1/1. With respect to regulation, inhibited by UTP. In terms of biological role, catalyzes the reversible phosphorylation of UMP to UDP. This is Uridylate kinase from Xanthomonas oryzae pv. oryzae (strain KACC10331 / KXO85).